The chain runs to 216 residues: Kynurenine formamidase (216 aa).

A substrate-binding site is contributed by W24. Zn(2+) is bound by residues H54, H58, and D60. H64 functions as the Proton donor/acceptor in the catalytic mechanism. Zn(2+)-binding residues include H164 and E176.

The protein belongs to the Cyclase 1 superfamily. KynB family. In terms of assembly, homodimer. Requires Zn(2+) as cofactor.

The enzyme catalyses N-formyl-L-kynurenine + H2O = L-kynurenine + formate + H(+). It functions in the pathway amino-acid degradation; L-tryptophan degradation via kynurenine pathway; L-kynurenine from L-tryptophan: step 2/2. Its function is as follows. Catalyzes the hydrolysis of N-formyl-L-kynurenine to L-kynurenine, the second step in the kynurenine pathway of tryptophan degradation. The polypeptide is Kynurenine formamidase (Erythrobacter litoralis (strain HTCC2594)).